The primary structure comprises 206 residues: Small ribosomal subunit protein eS1 (206 aa).

Belongs to the eukaryotic ribosomal protein eS1 family.

The sequence is that of Small ribosomal subunit protein eS1 from Natronomonas pharaonis (strain ATCC 35678 / DSM 2160 / CIP 103997 / JCM 8858 / NBRC 14720 / NCIMB 2260 / Gabara) (Halobacterium pharaonis).